Here is a 489-residue protein sequence, read N- to C-terminus: Glycogen synthase (489 aa).

An ADP-alpha-D-glucose-binding site is contributed by R20.

Belongs to the glycosyltransferase 1 family. Bacterial/plant glycogen synthase subfamily.

The enzyme catalyses [(1-&gt;4)-alpha-D-glucosyl](n) + ADP-alpha-D-glucose = [(1-&gt;4)-alpha-D-glucosyl](n+1) + ADP + H(+). The protein operates within glycan biosynthesis; glycogen biosynthesis. Its function is as follows. Synthesizes alpha-1,4-glucan chains using ADP-glucose. The protein is Glycogen synthase of Chlorobium phaeobacteroides (strain DSM 266 / SMG 266 / 2430).